The primary structure comprises 76 residues: Small ribosomal subunit protein bS18 (76 aa).

It belongs to the bacterial ribosomal protein bS18 family. As to quaternary structure, part of the 30S ribosomal subunit. Forms a tight heterodimer with protein bS6.

In terms of biological role, binds as a heterodimer with protein bS6 to the central domain of the 16S rRNA, where it helps stabilize the platform of the 30S subunit. This Aeromonas salmonicida (strain A449) protein is Small ribosomal subunit protein bS18.